We begin with the raw amino-acid sequence, 665 residues long: MKKPFYITTPIYYPSGKLHIGSAYTTIACDVLARYKRLMGHEVFYLTGLDEHGQKIQTKAKEAGISPQTYVDNMAKDVKALWQLLDISYDTFIRTTDDYHEEVVAAVFEKLLAQDDIYLGEYSGWYSVSDEEFFTESQLKEVFRDEDGQVIGGIAPSGHEVEWVSEESYFLRLSKYADRLVAFFKERPDFIQPDGRMNEMVKNFIEPGLEDLAVSRTTFTWGVPVPSDPKHVVYVWIDALLNYATALGYGQANHANFDKFWNGTVFHMVGKDILRFHSIYWPILLMMLDLPMPDRLIAHGWFVMKDGKMSKSKGNVVYPEMLVERFGLDPLRYYLMRSLPVGSDGTFTPEDYVGRINYELANDLGNLLNRTVAMINKYFDGTVPAYVDNGTAFDADLSQLIDAQLADYHKHMEAVDYPRALEAVWTIIARTNKYIDETAPWVLAKEDGDKAQLASVMAHLAASLRVVAHVIQPFMMETSAAIMAQLGLAPVSDLSTLALADFPANTKVVAKGTPIFPRLDMEAEIDYIKAQMGDSSAISQEKEWVPEEVALKSEKDVITFETFDAVEIRVAEVKEVSKVEGSEKLLRFRVDAGDGQDRQILSGIAKFYPNEQELVGKKLQIVANLKPRKMVKKYISQGMILSAEHGDQLTVLTVDSSVPNGSIIG.

The 'HIGH' region motif lies at 12–22 (YYPSGKLHIGS). The 'KMSKS' region signature appears at 308-312 (KMSKS). ATP is bound at residue Lys311. Positions 562–665 (TFDAVEIRVA…SSVPNGSIIG (104 aa)) constitute a tRNA-binding domain.

It belongs to the class-I aminoacyl-tRNA synthetase family. MetG type 2B subfamily. As to quaternary structure, homodimer.

Its subcellular location is the cytoplasm. It catalyses the reaction tRNA(Met) + L-methionine + ATP = L-methionyl-tRNA(Met) + AMP + diphosphate. Functionally, is required not only for elongation of protein synthesis but also for the initiation of all mRNA translation through initiator tRNA(fMet) aminoacylation. The protein is Methionine--tRNA ligase (metG) of Streptococcus pyogenes serotype M18 (strain MGAS8232).